The chain runs to 870 residues: Adhesin AWP1 (870 aa).

A signal peptide spans 1-18 (MSLITIFAFFIKATLVLS). Asn-224 is a glycosylation site (N-linked (GlcNAc...) asparagine). Cys-284 and Cys-322 form a disulfide bridge. Residues 329 to 835 (ITPSSSVEPS…TRQTSVIAPG (507 aa)) are disordered. Residues 331–566 (PSSSVEPSSS…SSSAVVPTSS (236 aa)) show a composition bias toward low complexity. Residues 567–576 (AGGGNGGDNG) are compositionally biased toward gly residues. Over residues 577 to 641 (QPGADGQPGA…PGAAGQPGAA (65 aa)) the composition is skewed to low complexity. Gly residues predominate over residues 642–652 (GQPGAGSGGGS). A glycan (N-linked (GlcNAc...) asparagine) is linked at Asn-669. A compositionally biased stretch (gly residues) spans 675–721 (SGTGNGQAGSGQAGSGQVGSGQAGAGQAGSGQAGAGQAGSGQAGAGQ). Polar residues-rich tracts occupy residues 724–735 (LDNTASGQSEGG) and 792–801 (GSGTDQSSGR).

The protein resides in the secreted. It localises to the cell wall. Its function is as follows. May play a role in cell adhesion. In Candida glabrata (strain ATCC 2001 / BCRC 20586 / JCM 3761 / NBRC 0622 / NRRL Y-65 / CBS 138) (Yeast), this protein is Adhesin AWP1.